We begin with the raw amino-acid sequence, 449 residues long: MRRVTSVYVWLTVVVKDNTIIATAIPRITDQFKALEDVGWYGSSYLLVTCMFQLIFGKLYGYFPIKWVFLAAIIIFEIGSAVCGAAPTSDAFILEMVVSTYLPEPFDHVLSAGSFYINLPIGAVVIVVLLQFLHVPNTVPVEASSKTLFQHMDPLGVVTFLPAIVCLLLALQWGGTTFPWANGRIIALFVLAGVLLIAFLAIQRKRQDNAMVPPRIITMHPVAFSSLFMTLFAGAYFTIIYYLPIWFQAIKNASAVNSGIMCLPLMLSMVIFSFVAGGGVTATGNPVPFFYIATVLAAAGAGLMTTFEVHTGHPKWIGYQVLLGSGVGMGIQLPIIAVQAVLPAADIPVGTAILTFCQTFGGAIFVSVAQAVFANRLQTGLLRAVPGVSPGLVQEVGATNLDTVIDAQHMGAVKVVYNDALVSAWYLAVALFSVAVLGAVGMSTKRKSA.

The next 7 membrane-spanning stretches (helical) occupy residues serine 6 to proline 26, tyrosine 45 to isoleucine 65, tryptophan 67 to proline 87, phenylalanine 115 to valine 135, leucine 155 to glycine 175, asparagine 182 to isoleucine 202, and leucine 227 to phenylalanine 247. N-linked (GlcNAc...) asparagine glycosylation occurs at asparagine 252. 5 helical membrane passes run isoleucine 260–valine 280, valine 287–phenylalanine 307, valine 321–valine 341, valine 349–alanine 369, and alanine 420–valine 440.

Belongs to the major facilitator superfamily.

It is found in the cell membrane. Efflux pump that may provide the dual role of acetylaranotin export and self-protection by allowing the fungus to evade the harmful effect of its own acetylaranotin production. The protein is MFS acetylaranotin efflux transporter ataA of Aspergillus terreus (strain NIH 2624 / FGSC A1156).